The primary structure comprises 224 residues: Thiamine-phosphate synthase (224 aa).

4-amino-2-methyl-5-(diphosphooxymethyl)pyrimidine is bound by residues 44-48 and Asn79; that span reads QFREK. Mg(2+) contacts are provided by Asp80 and Asp99. Ser117 is a binding site for 4-amino-2-methyl-5-(diphosphooxymethyl)pyrimidine. 2-[(2R,5Z)-2-carboxy-4-methylthiazol-5(2H)-ylidene]ethyl phosphate is bound at residue 143–145; it reads TET. Residue Lys146 coordinates 4-amino-2-methyl-5-(diphosphooxymethyl)pyrimidine. Residues Gly175 and 195-196 contribute to the 2-[(2R,5Z)-2-carboxy-4-methylthiazol-5(2H)-ylidene]ethyl phosphate site; that span reads IS.

Belongs to the thiamine-phosphate synthase family. Mg(2+) is required as a cofactor.

The catalysed reaction is 2-[(2R,5Z)-2-carboxy-4-methylthiazol-5(2H)-ylidene]ethyl phosphate + 4-amino-2-methyl-5-(diphosphooxymethyl)pyrimidine + 2 H(+) = thiamine phosphate + CO2 + diphosphate. The enzyme catalyses 2-(2-carboxy-4-methylthiazol-5-yl)ethyl phosphate + 4-amino-2-methyl-5-(diphosphooxymethyl)pyrimidine + 2 H(+) = thiamine phosphate + CO2 + diphosphate. It catalyses the reaction 4-methyl-5-(2-phosphooxyethyl)-thiazole + 4-amino-2-methyl-5-(diphosphooxymethyl)pyrimidine + H(+) = thiamine phosphate + diphosphate. It participates in cofactor biosynthesis; thiamine diphosphate biosynthesis; thiamine phosphate from 4-amino-2-methyl-5-diphosphomethylpyrimidine and 4-methyl-5-(2-phosphoethyl)-thiazole: step 1/1. Condenses 4-methyl-5-(beta-hydroxyethyl)thiazole monophosphate (THZ-P) and 2-methyl-4-amino-5-hydroxymethyl pyrimidine pyrophosphate (HMP-PP) to form thiamine monophosphate (TMP). The chain is Thiamine-phosphate synthase from Bacillus velezensis (strain DSM 23117 / BGSC 10A6 / LMG 26770 / FZB42) (Bacillus amyloliquefaciens subsp. plantarum).